A 281-amino-acid polypeptide reads, in one-letter code: Transcription factor bHLH79 (281 aa).

The disordered stretch occupies residues 47–167 (FTRSEHSGNK…GQATDRHSLA (121 aa)). Basic and acidic residues-rich tracts occupy residues 77-88 (KTRDLNSEDDSS) and 138-152 (TEQKNKPEPPKDYIH). In terms of domain architecture, bHLH spans 159 to 209 (QATDRHSLAERARREKISEKMTALQDIIPGCNKIIGKALVLDEIINYIQSL).

Homodimer.

It is found in the nucleus. The polypeptide is Transcription factor bHLH79 (BHLH79) (Arabidopsis thaliana (Mouse-ear cress)).